Consider the following 613-residue polypeptide: Proline--tRNA ligase (613 aa).

Belongs to the class-II aminoacyl-tRNA synthetase family. ProS type 1 subfamily. In terms of assembly, homodimer.

The protein localises to the cytoplasm. It catalyses the reaction tRNA(Pro) + L-proline + ATP = L-prolyl-tRNA(Pro) + AMP + diphosphate. Functionally, catalyzes the attachment of proline to tRNA(Pro) in a two-step reaction: proline is first activated by ATP to form Pro-AMP and then transferred to the acceptor end of tRNA(Pro). As ProRS can inadvertently accommodate and process non-cognate amino acids such as alanine and cysteine, to avoid such errors it has two additional distinct editing activities against alanine. One activity is designated as 'pretransfer' editing and involves the tRNA(Pro)-independent hydrolysis of activated Ala-AMP. The other activity is designated 'posttransfer' editing and involves deacylation of mischarged Ala-tRNA(Pro). The misacylated Cys-tRNA(Pro) is not edited by ProRS. This chain is Proline--tRNA ligase, found in Tropheryma whipplei (strain Twist) (Whipple's bacillus).